Here is a 250-residue protein sequence, read N- to C-terminus: GTP cyclohydrolase 1 type 2 homolog (250 aa).

A divalent metal cation contacts are provided by H63, H64, D100, H218, and E222.

It belongs to the GTP cyclohydrolase I type 2/NIF3 family. In terms of assembly, homohexamer.

This is GTP cyclohydrolase 1 type 2 homolog from Pyrococcus horikoshii (strain ATCC 700860 / DSM 12428 / JCM 9974 / NBRC 100139 / OT-3).